Reading from the N-terminus, the 207-residue chain is Elongation factor 1-beta (207 aa).

Position 2 is an N-acetylalanine (A2). Residues 70–96 (FPGIPTSASKEEDDDVDLFGSDEEDEE) form a disordered region. Acidic residues predominate over residues 80 to 96 (EEDDDVDLFGSDEEDEE). S90 is modified (phosphoserine; by CK2).

Belongs to the EF-1-beta/EF-1-delta family. As to quaternary structure, EF-1 is composed of 4 subunits: alpha, beta, delta, and gamma. Post-translationally, phosphorylation affects the GDP/GTP exchange rate.

Functionally, EF-1-beta and EF-1-delta stimulate the exchange of GDP bound to EF-1-alpha to GTP. This Artemia salina (Brine shrimp) protein is Elongation factor 1-beta.